A 613-amino-acid polypeptide reads, in one-letter code: Autophagy-related protein 22-2 (613 aa).

Residues Met-1–Thr-30 are disordered. A helical membrane pass occupies residues Tyr-41–Leu-61. Asn-90 is a glycosylation site (N-linked (GlcNAc...) asparagine). 7 helical membrane-spanning segments follow: residues Ser-120–Phe-140, Leu-167–Val-187, Cys-189–Pro-209, Val-278–Ala-298, Ile-307–Phe-327, Val-382–Thr-402, and Val-418–Val-438. Asn-448 is a glycosylation site (N-linked (GlcNAc...) asparagine). A run of 4 helical transmembrane segments spans residues Leu-453–Phe-473, Gly-477–Val-497, Phe-508–Thr-528, and Gly-553–Ala-573. A disordered region spans residues Arg-592–Ile-613.

The protein belongs to the ATG22 family.

Its subcellular location is the vacuole membrane. In terms of biological role, vacuolar effluxer which mediate the efflux of amino acids resulting from autophagic degradation. The release of autophagic amino acids allows the maintenance of protein synthesis and viability during nitrogen starvation. The protein is Autophagy-related protein 22-2 (atg22-2) of Aspergillus fumigatus (strain ATCC MYA-4609 / CBS 101355 / FGSC A1100 / Af293) (Neosartorya fumigata).